The primary structure comprises 697 residues: Probable glutamine--tRNA ligase (697 aa).

The short motif at 204-214 (PEPNGILHIGH) is the 'HIGH' region element. ATP contacts are provided by residues 205 to 207 (EPN) and 211 to 217 (HIGHAKA). Residues D237 and Y386 each coordinate L-glutamine. ATP contacts are provided by residues T405, 434-435 (RL), and 442-444 (LSK). The 'KMSKS' region signature appears at 441-445 (VLSKR).

The protein belongs to the class-I aminoacyl-tRNA synthetase family.

The enzyme catalyses tRNA(Gln) + L-glutamine + ATP = L-glutaminyl-tRNA(Gln) + AMP + diphosphate. The chain is Probable glutamine--tRNA ligase from Encephalitozoon cuniculi (strain GB-M1) (Microsporidian parasite).